A 432-amino-acid chain; its full sequence is uncharacterized protein (432 aa).

K243 is modified (N6-(pyridoxal phosphate)lysine).

Belongs to the class-II pyridoxal-phosphate-dependent aminotransferase family. Pyridoxal 5'-phosphate serves as cofactor.

The protein resides in the cytoplasm. This is an uncharacterized protein from Methanocaldococcus jannaschii (strain ATCC 43067 / DSM 2661 / JAL-1 / JCM 10045 / NBRC 100440) (Methanococcus jannaschii).